The chain runs to 332 residues: MDKSLFYNPQKMLSYDRILNFVIGARGIGKSYAMKVYPINRFIKYGEQFIYVRRYKPELAKVSNYFNDVAQEFPDHELVVKGRRFYIDGKLAGWAIPLSVWQSEKSNAYPNVSTIVFDEFIREKDNSNYIPNEVSALLNLMDTVFRNRERVRCICLSNAVSVVNPYFLFFNLVPDVNKRFNVYDDALIEIPDSLDFSSERRKTRFGRLIDGTEYGEMSLDNQFIGDSQVFIEKRSKDSKFVFSIVYNGFTLGVWVDVNQGLMYIDTAHDPSTKNVYTLTTDDLNENMMLITNYKNNYHLRKLASAFMNGYLRFDNQVIRNIAYELFRKMRIQ.

The interval 1 to 207 (MDKSLFYNPQ…SERRKTRFGR (207 aa)) is ATPase. 24 to 31 (GARGIGKS) is an ATP binding site. A DNA-binding region spans residues 233 to 332 (KRSKDSKFVF…YELFRKMRIQ (100 aa)).

It belongs to the phi29likevirus gp16 family. As to quaternary structure, homopentamer. Interacts with the packaging RNA (pRNA). Part of a DNA-gp3-gp16 complex.

It catalyses the reaction ATP + H2O = ADP + phosphate + H(+). Functionally, ATPase required for the genome encapsidation reaction. Part of the active packaging motor via the binding to the packaging RNA (pRNA), itself fixed to the head-tail connector at the unique portal vertex of the prohead. Binds and supercoils the pre-formed, unit-length DNA bound to gp3 to produce an initiation complex for DNA packaging. Provides the energy to actively pump the viral DNA into the prohead. Approximately one molecule of ATP is used in the packaging of 2 bp of viral DNA. ATP hydrolysis results in a conformational change that causes the arginine/lysine finger of one subunit to move into the active site of its neighbor, where it interacts with the negatively charged oxygens on the gamma-phosphate of ATP. After packaging, the ATPase and the pRNA are released from the prohead. The polypeptide is DNA packaging protein (16) (Bacillus phage phi29 (Bacteriophage phi-29)).